Consider the following 388-residue polypeptide: Succinate--CoA ligase [ADP-forming] subunit beta (388 aa).

Positions 9–244 (KQIFAQYGLP…PSQEDAREAA (236 aa)) constitute an ATP-grasp domain. ATP contacts are provided by residues K46, 53–55 (GRG), E99, A102, and E107. Residues N199 and D213 each contribute to the Mg(2+) site. Substrate is bound by residues N264 and 321-323 (GIV).

It belongs to the succinate/malate CoA ligase beta subunit family. In terms of assembly, heterotetramer of two alpha and two beta subunits. Mg(2+) is required as a cofactor.

It carries out the reaction succinate + ATP + CoA = succinyl-CoA + ADP + phosphate. The catalysed reaction is GTP + succinate + CoA = succinyl-CoA + GDP + phosphate. The protein operates within carbohydrate metabolism; tricarboxylic acid cycle; succinate from succinyl-CoA (ligase route): step 1/1. In terms of biological role, succinyl-CoA synthetase functions in the citric acid cycle (TCA), coupling the hydrolysis of succinyl-CoA to the synthesis of either ATP or GTP and thus represents the only step of substrate-level phosphorylation in the TCA. The beta subunit provides nucleotide specificity of the enzyme and binds the substrate succinate, while the binding sites for coenzyme A and phosphate are found in the alpha subunit. The protein is Succinate--CoA ligase [ADP-forming] subunit beta of Mannheimia succiniciproducens (strain KCTC 0769BP / MBEL55E).